Consider the following 2349-residue polypeptide: MNGKSRDNGHDGKRQPVVPAEPIAIVGTAMRLPGDATNPSKLWQLLRNPPSDLSRRPPSERFSSAGFFHEDPEHHGTSNSEQSYFLREDIRAFDAAFFSIAPREAEAIDPQHRLLLEVVYEALEAAGIPLEKTQGSDTAVYVGQMSNDYWDHLLRDLDSIPKYMATGTARSVTANRLSYFFDWHGPSMTIDTACSSSMVALHEAVQVLRSGRAGMAVAAGCHLVLGPESYVIESKLRMISPTGTCKMWDAGADGYARAEGCAALILKTLSSALRDGDPIAALIRETGVNQDGRTRGITMPSAQAQAALIRETYLRAGLDPTHPRDQPQLFEAHGTGTQAGDPIEAEAIHLAFFNDGVAHKGTRERKEREKLLVGSIKTVVGHLEATAGLAGILKGIAAMNHRMVPPNLWFRTLNQRIAPFYRDFRVPTVLEEWPMTGFDGTLRCSVNSFGFGGTNAHTILESYEPQLVTATKMPREISFITPLTFSAASAASLVAVVDSYRRHLASKQDISLADLAFTLQSRRSALPYRIAFSGTDITSLIKQMSESVDSVKGTANVSIGTLNQQGKLEGGPPKLLGVFTGQGAQWPGMGRELLKSSKVFSDAIIKMEDSLATLPDPPSWSLVDQFKAKASPSSSEEATVAQPVSLALQIGLVDLLRASGVEFDSVVAHSSGEIAAAYTTGLISAHDAIRIAYYRGKYSALATEGGGMMAVGMSFAEAEAFCNQEQLRGRVTAAASNSPKSTTLSGRLSTLKEAASLLGNTFHRFLKVDKAYHSDAMLPCCKPFQAILEKCDIKVHKPNDVLWVSSVREGQQPRSFADLLSGPYWVETLHKPVLFSQALTRVLQMRSFDATLEIGPHPALRGPSLQTHADISLEKGKVLLYKGVLERFKHDGEAFSSCLGFLWQHFGWAHFEAYRSTSLTTDVPRVLDQLPTYPWNHESLYWTESSNSYRFRYREAYHPLLGFRSVDSHAMELRWKNVWSLREMPWLKGHVVQGQAVVPGVSYVTLALEAAAALGREGQETTRIELHDINIHRAIIVEEDEYSGTNVFVSVSRQNPDASCTRATFNIYASTNHEKEPFHVCSGDILLSHFAKDSGIQALGEFVVSTVYKDMSSVEPSLFYSEMKEVGLCWKEPFLSDSMYRSHHRSVLSATRSTADAHDGQLLLSPVLLDIGFQGALVGFASPGDGRLWNPYLPTHIDRCTFDLENLKLNKPCYDEVYFSSAVMGSTLPDLSTTATFTCDVYGFYAIDGNPFVQVEGLKFSCMYPAQETNDREMFANETWMPASPLDMELQPYDAQKHMGNLGAVVENLSHCDPRMKILHISDGESLVVPILESLQGAFARLDIADSSQSPALRHVEEVKELFPKDSKRIWSSDLNLTKLTSSPAIAENSYDLIICAQTIETGDDVESRCSKLRKLLKLGGSIILSTSPGTSCNLPLQRCGFTGVELELSVGPESRLILTRAKDDTSKTLETPLDDLDACTGEVIVIGGHQPEIQAIVDTFQKDVAGKLSKMTLLESLSDLETYGIPTDATVLCLADLHDDTLRNLAEGTLGGMKLLFETARRVLWVTQGRRNQNPFASMMVGLGRCIISESPLLNLQFLDIEDPLSDPVTHKTISECFIRLISLTTTGDFNVVRSWNQEPEMVLSQGKLLIPRIRPLPALNDRLNCQNRIIKKPLIAGDGTSVELTRSGAFYAAQEYDDYSAGRRITISHSVSLPIELPGQMKGYLGLGTMSSGERVVVISPNNRNIQSAEECAFAVHFQPRGNEADTLALIASAIFIRMAWEHTSDYVVLHQPSQSVYRLGTQMAEDAKSKLYFSVSGRNDLEKHANVVSIPSMATRQSLRNLMPGQVGAFIHVPGLAGAGDRVSADRMIRAMSTTCKIFHLATAAASSQNKSIDIRLSFNWKKACRILVQSVEDVAKFGNSNMLAENQPVKCIGIAEISGTPFSYDAARIIDWTKDSRLKVNIQSKNPTKHFSPNKTYLLVGLTGDLGRSLAQWMVRCGAQHIVLTSRSPRVPDSWLQACREISPQAQVRVFKMDVTDEADVRSVCHSICKSMPPIGGVANAAMVMDDCLFHKLQLASFNRVVEPKVVGSMILDKIFHDVDLDFFIMFSSISCIVGNRGQSSYSAANLAETTIASGRRSRGLSASTLALGMVVGVGYVARANLPTEAIKDNVRMQNGIPLGETDVHTAFFEAMLLGKESSRLIPELITGLKSIGSEDVELPLWHENPRFSHLSLLEGLDDVSLDSKKSSQGKVSVREQLRQSTMPQEPFEILSGSLKQKLKVMLKIDKQEISDEVALVQMGIDSLSAVEIRSWFAKEVGVDLPVLKILNGASIRGLCLEAIGQWKK.

Over residues 1 to 14 the composition is skewed to basic and acidic residues; it reads MNGKSRDNGHDGKR. Disordered stretches follow at residues 1 to 21 and 37 to 80; these read MNGKSRDNGHDGKRQPVVPAE and TNPS…TSNS. The region spanning 20–462 is the Ketosynthase family 3 (KS3) domain; that stretch reads AEPIAIVGTA…GTNAHTILES (443 aa). Active-site for beta-ketoacyl synthase activity residues include cysteine 194, histidine 333, and histidine 382. Positions 578–888 are malonyl-CoA:ACP transacylase (MAT) domain; that stretch reads VFTGQGAQWP…LLYKGVLERF (311 aa). Positions 958–1092 are N-terminal hotdog fold; it reads HPLLGFRSVD…GDILLSHFAK (135 aa). The tract at residues 958 to 1263 is dehydratase (DH) domain; sequence HPLLGFRSVD…QVEGLKFSCM (306 aa). Residues 958–1269 form the PKS/mFAS DH domain; sequence HPLLGFRSVD…FSCMYPAQET (312 aa). The active-site Proton acceptor; for dehydratase activity is histidine 990. The interval 1111-1269 is C-terminal hotdog fold; sequence MSSVEPSLFY…FSCMYPAQET (159 aa). The active-site Proton donor; for dehydratase activity is aspartate 1170. A ketoreductase (KR) domain region spans residues 1976 to 2164; sequence SPNKTYLLVG…VVGVGYVARA (189 aa). Residues 2273-2347 enclose the Carrier domain; sequence EILSGSLKQK…GLCLEAIGQW (75 aa). At serine 2307 the chain carries O-(pantetheine 4'-phosphoryl)serine.

The protein operates within mycotoxin biosynthesis. Reducing polyketide synthase; part of the gene clusters that mediate the biosynthesis of the host-selective toxins (HSTs) AF-toxins responsible for Alternaria black spot of strawberry disease by the strawberry pathotype. AF-toxin I and III are valine derivatives of 2,3-dyhydroxy-isovaleric acid and 2-hydroxy-isovaleric acid respectively, while AF II is an isoleucine derivative of 2-hydroxy-valeric acid. These derivatives are bound to a 9,10-epoxy-8-hydroxy-9-methyl-decatrienoic acid (EDA) moiety. On cellular level, AF-toxins affect plasma membrane of susceptible cells and cause a sudden increase in loss of K(+) after a few minutes of toxin treatment. The aldo-keto reductase AFTS1 catalyzes the conversion of 2-keto-isovaleric acid (2-KIV) to 2-hydroxy-isovaleric acid (2-HIV) by reduction of its ketone to an alcohol. The acyl-CoA ligase AFT1, the hydrolase AFT2 and the enoyl-CoA hydratases AFT3 and AFT6, but also the polyketide synthase AFT9, the acyl-CoA dehydrogenase AFT10, the cytochrome P450 monooxygenase AFT11 and the oxidoreductase AFT12 are all involved in the biosynthesis of the AK-, AF- and ACT-toxin common EDA structural moiety. The exact function of each enzyme, and of additional enzymes identified within the AF-toxin clusters have still to be determined. The chain is Reducing polyketide synthase AFT16-1 from Alternaria alternata (Alternaria rot fungus).